Consider the following 161-residue polypeptide: Allophycocyanin alpha chain (161 aa).

At Asn71 the chain carries N4-methylasparagine. A (2R,3E)-phycocyanobilin-binding site is contributed by Cys81.

The protein belongs to the phycobiliprotein family. In terms of assembly, heterodimer of an alpha and a beta chain. Post-translationally, contains one covalently linked phycocyanobilin chromophore.

Its subcellular location is the plastid. It localises to the chloroplast thylakoid membrane. In terms of biological role, light-harvesting photosynthetic bile pigment-protein from the phycobiliprotein complex. Allophycocyanin has a maximum absorption at approximately 650 nanometers. This chain is Allophycocyanin alpha chain (apcA), found in Aglaothamnion neglectum (Red alga).